Reading from the N-terminus, the 299-residue chain is Zinc import ATP-binding protein ZnuC (299 aa).

Positions 13-228 (VSLANAGVQR…PEYMRLFGGT (216 aa)) constitute an ABC transporter domain. 45 to 52 (GPNGSGKS) lines the ATP pocket.

Belongs to the ABC transporter superfamily. Zinc importer (TC 3.A.1.15.5) family. The complex is composed of two ATP-binding proteins (ZnuC), two transmembrane proteins (ZnuB) and a solute-binding protein (ZnuA).

The protein resides in the cell inner membrane. It carries out the reaction Zn(2+)(out) + ATP(in) + H2O(in) = Zn(2+)(in) + ADP(in) + phosphate(in) + H(+)(in). Functionally, part of the ABC transporter complex ZnuABC involved in zinc import. Responsible for energy coupling to the transport system. The polypeptide is Zinc import ATP-binding protein ZnuC (Agrobacterium fabrum (strain C58 / ATCC 33970) (Agrobacterium tumefaciens (strain C58))).